A 447-amino-acid polypeptide reads, in one-letter code: Cysteine--tRNA ligase (447 aa).

Cysteine 28 contacts Zn(2+). The 'HIGH' region signature appears at 30–40 (PTVYNYIHIGN). The Zn(2+) site is built by cysteine 211, histidine 236, and glutamate 240. Residues 268–272 (KMSKS) carry the 'KMSKS' region motif. An ATP-binding site is contributed by lysine 271.

This sequence belongs to the class-I aminoacyl-tRNA synthetase family. As to quaternary structure, monomer. Zn(2+) is required as a cofactor.

Its subcellular location is the cytoplasm. The catalysed reaction is tRNA(Cys) + L-cysteine + ATP = L-cysteinyl-tRNA(Cys) + AMP + diphosphate. This chain is Cysteine--tRNA ligase, found in Streptococcus agalactiae serotype Ia (strain ATCC 27591 / A909 / CDC SS700).